We begin with the raw amino-acid sequence, 680 residues long: Protein terminal ear1 homolog (680 aa).

The RRM domain maps to 223-295; that stretch reads SLVVLNSLPA…RRLVVEYTRP (73 aa). Disordered regions lie at residues 294 to 415 and 593 to 680; these read RPSL…SWRG and TEPV…GYTD. 2 stretches are compositionally biased toward low complexity: residues 328-340 and 379-403; these read PSQSAQPSSSGSG and SAAAACSTAASASSSTATAPSKQSQ. Residues 404-413 are compositionally biased toward gly residues; that stretch reads KGGGGRGGSW. Low complexity-rich tracts occupy residues 602–621 and 634–648; these read SPAPSSASGASSPPKSCAAS and SSSGDGASSASSSNA. A compositionally biased stretch (basic and acidic residues) spans 656-666; the sequence is HGETGGDRGDD.

As to expression, highly expressed in shoot apex and inflorescence apex, at intermediate levels in roots and at low levels in leaf blade and leaf sheath.

In terms of biological role, probable RNA-binding protein. Involved in the regular timing (plastochron) of lateral organs formation. May regulate the rate of leaf initiation and the duration of vegetative phase. Seems to be redundant to the function of PLASTOCHRON1, but to act in an independent pathway. In Oryza sativa subsp. indica (Rice), this protein is Protein terminal ear1 homolog (PLA2).